The following is a 285-amino-acid chain: CCR4-NOT transcription complex subunit 7 (285 aa).

A divalent metal cation-binding residues include Asp-40, Glu-42, Asp-161, Asp-230, and Glu-278.

This sequence belongs to the CAF1 family. As to quaternary structure, component of the CCR4-NOT complex. It depends on Mn(2+) as a cofactor. Requires Mg(2+) as cofactor. Co(2+) is required as a cofactor.

It localises to the nucleus. The protein resides in the cytoplasm. The enzyme catalyses Exonucleolytic cleavage of poly(A) to 5'-AMP.. Its function is as follows. Has 3'-5' poly(A) exoribonuclease activity for synthetic poly(A) RNA substrate. Catalytic component of the CCR4-NOT complex which is one of the major cellular mRNA deadenylases and is linked to various cellular processes including bulk mRNA degradation, miRNA-mediated repression, translational repression during translational initiation and general transcription regulation. During miRNA-mediated repression the complex also seems to act as translational repressor during translational initiation. Additional complex functions may be a consequence of its influence on mRNA expression. The protein is CCR4-NOT transcription complex subunit 7 (CNOT7) of Gallus gallus (Chicken).